A 299-amino-acid polypeptide reads, in one-letter code: Tyrosine recombinase XerC (299 aa).

The region spanning 3 to 87 (PQCQSYLQQF…AIKQWGEFLL (85 aa)) is the Core-binding (CB) domain. Positions 108 to 287 (PLPKNIDVDS…DFQHLAKVYD (180 aa)) constitute a Tyr recombinase domain. Active-site residues include arginine 147, lysine 171, histidine 239, arginine 242, and histidine 265. The active-site O-(3'-phospho-DNA)-tyrosine intermediate is tyrosine 274.

It belongs to the 'phage' integrase family. XerC subfamily. In terms of assembly, forms a cyclic heterotetrameric complex composed of two molecules of XerC and two molecules of XerD.

It localises to the cytoplasm. Functionally, site-specific tyrosine recombinase, which acts by catalyzing the cutting and rejoining of the recombining DNA molecules. The XerC-XerD complex is essential to convert dimers of the bacterial chromosome into monomers to permit their segregation at cell division. It also contributes to the segregational stability of plasmids. In Shewanella sp. (strain ANA-3), this protein is Tyrosine recombinase XerC.